The chain runs to 146 residues: MORN repeat-containing protein 4 (146 aa).

4 MORN repeats span residues 16 to 38 (YRGEWKEGRRHGFGQLVFADGGT), 39 to 61 (YLGHFENGLFNGFGVLTFSDGSR), 62 to 84 (YEGEFSQGKFNGVGVFIRYDNMT), and 85 to 107 (FEGEFKNGRVDGFGLLTFPDGSH).

In terms of assembly, interacts with MYO3A.

The protein localises to the cytoplasm. It localises to the cell projection. Its subcellular location is the filopodium tip. The protein resides in the stereocilium. Its function is as follows. Plays a role in promoting axonal degeneration following neuronal injury by toxic insult or trauma. In Mus musculus (Mouse), this protein is MORN repeat-containing protein 4 (Morn4).